The chain runs to 130 residues: Small ribosomal subunit protein uS9 (130 aa).

Belongs to the universal ribosomal protein uS9 family.

This chain is Small ribosomal subunit protein uS9, found in Exiguobacterium sibiricum (strain DSM 17290 / CCUG 55495 / CIP 109462 / JCM 13490 / 255-15).